The sequence spans 471 residues: PTS system mannitol-specific EIICB component (471 aa).

Residues 1-29 (MTHTSENQAGFRVKIQRFGSYLSGMIMPN) are Cytoplasmic-facing. One can recognise a PTS EIIC type-2 domain in the interval 18–342 (FGSYLSGMIM…FFVASIFLKS (325 aa)). A helical membrane pass occupies residues 30 to 51 (IGAFIAWGIITALFIPTGWLPN). Topologically, residues 52 to 55 (ETFA) are extracellular. Residues 56 to 76 (KLVGPMITYLLPLLIGYTGGK) traverse the membrane as a helical segment. Residues 77 to 139 (MIYDVRGGVV…QGFEMLVNNF (63 aa)) lie on the Cytoplasmic side of the membrane. A helical transmembrane segment spans residues 140–161 (SAGIIGGLLTLAAFKGVGPVVS). Topologically, residues 162–170 (AISKTLAAG) are extracellular. A helical transmembrane segment spans residues 171–191 (VEKIVDLHLLPLANIFIEPGK). At 192-278 (VLFLNNAINH…VLMRPILILA (87 aa)) the chain is on the cytoplasmic side. A helical transmembrane segment spans residues 279–298 (AIAGGVSGVLTFTIFDAGLV). Residues 299-318 (AVPSPGSIFALLAMTPKGNY) lie on the Extracellular side of the membrane. The chain crosses the membrane as a helical span at residues 319–340 (LGVLAGVLVATAVSFFVASIFL). Residues 341–471 (KSAKNNEEDI…YDELIEMLKK (131 aa)) lie on the Cytoplasmic side of the membrane. One can recognise a PTS EIIB type-2 domain in the interval 383–471 (KKIVFACDAG…YDELIEMLKK (89 aa)). Catalysis depends on Cys389, which acts as the Phosphocysteine intermediate; for EIIB activity. At Cys389 the chain carries Phosphocysteine; by EIIA.

In terms of assembly, homodimer.

Its subcellular location is the cell membrane. It carries out the reaction D-mannitol(out) + N(pros)-phospho-L-histidyl-[protein] = D-mannitol 1-phosphate(in) + L-histidyl-[protein]. Functionally, the phosphoenolpyruvate-dependent sugar phosphotransferase system (sugar PTS), a major carbohydrate active transport system, catalyzes the phosphorylation of incoming sugar substrates concomitantly with their translocation across the cell membrane. The enzyme II CmtAB PTS system is involved in D-mannitol transport. This chain is PTS system mannitol-specific EIICB component, found in Geobacillus stearothermophilus (Bacillus stearothermophilus).